Reading from the N-terminus, the 324-residue chain is Quinolinate synthase (324 aa).

2 residues coordinate iminosuccinate: H39 and S56. Residue C101 coordinates [4Fe-4S] cluster. Residues 127-129 (YIN) and S144 each bind iminosuccinate. Position 187 (C187) interacts with [4Fe-4S] cluster. Residues 213–215 (HPE) and T230 contribute to the iminosuccinate site. C280 is a [4Fe-4S] cluster binding site.

This sequence belongs to the quinolinate synthase family. Type 2 subfamily. The cofactor is [4Fe-4S] cluster.

It localises to the cytoplasm. The enzyme catalyses iminosuccinate + dihydroxyacetone phosphate = quinolinate + phosphate + 2 H2O + H(+). It participates in cofactor biosynthesis; NAD(+) biosynthesis; quinolinate from iminoaspartate: step 1/1. In terms of biological role, catalyzes the condensation of iminoaspartate with dihydroxyacetone phosphate to form quinolinate. This chain is Quinolinate synthase, found in Nostoc sp. (strain PCC 7120 / SAG 25.82 / UTEX 2576).